Here is a 58-residue protein sequence, read N- to C-terminus: COP9 signalosome complex subunit 6b (58 aa).

Belongs to the peptidase M67A family. CSN6 subfamily. As to quaternary structure, component of the CSN complex, probably composed of CSN1, CSN2, CSN3, CSN4, CSN5 (CSN5A or CSN5B), CSN6 (CSN6A or CSN6B), CSN7 and CSN8.

It is found in the cytoplasm. It localises to the nucleus. Component of the COP9 signalosome complex (CSN), a complex involved in various cellular and developmental processes such as photomorphogenesis and auxin and jasmonate responses. The CSN complex is an essential regulator of the ubiquitin (Ubl) conjugation pathway by mediating the deneddylation of the cullin subunits of SCF-type E3 ligase complexes, leading to decrease the Ubl ligase activity of SCF. It is involved in repression of photomorphogenesis in darkness by regulating the activity of COP1-containing Ubl ligase complexes. The protein is COP9 signalosome complex subunit 6b (CSN6B) of Brassica oleracea (Wild cabbage).